Consider the following 338-residue polypeptide: Pyridoxal 5'-phosphate synthase subunit PdxS (338 aa).

D66 is a D-ribose 5-phosphate binding site. The Schiff-base intermediate with D-ribose 5-phosphate role is filled by K123. G195 is a D-ribose 5-phosphate binding site. K207 provides a ligand contact to D-glyceraldehyde 3-phosphate. D-ribose 5-phosphate-binding positions include G256 and 277–278 (GS).

This sequence belongs to the PdxS/SNZ family. In the presence of PdxT, forms a dodecamer of heterodimers.

The catalysed reaction is aldehydo-D-ribose 5-phosphate + D-glyceraldehyde 3-phosphate + L-glutamine = pyridoxal 5'-phosphate + L-glutamate + phosphate + 3 H2O + H(+). It functions in the pathway cofactor biosynthesis; pyridoxal 5'-phosphate biosynthesis. Its function is as follows. Catalyzes the formation of pyridoxal 5'-phosphate from ribose 5-phosphate (RBP), glyceraldehyde 3-phosphate (G3P) and ammonia. The ammonia is provided by the PdxT subunit. Can also use ribulose 5-phosphate and dihydroxyacetone phosphate as substrates, resulting from enzyme-catalyzed isomerization of RBP and G3P, respectively. This Saccharolobus islandicus (strain Y.N.15.51 / Yellowstone #2) (Sulfolobus islandicus) protein is Pyridoxal 5'-phosphate synthase subunit PdxS.